Reading from the N-terminus, the 778-residue chain is Zinc finger protein 749 (778 aa).

Residues 8-101 (MVFEDVAIYF…ILKDILHLAE (94 aa)) enclose the KRAB domain. A C2H2-type 1; degenerate zinc finger spans residues 152–174 (FTCTQGGKDFTASSDLLQQQVLN). The segment at 196-218 (FNSSQGGKDFCHQHGLFEHQKTH) adopts a C2H2-type 2; degenerate zinc-finger fold. The C2H2-type 3; degenerate zinc finger occupies 224–246 (YEFSECGELFRYNSNLIKYQQNH). The C2H2-type 4; degenerate zinc finger occupies 252 to 274 (YEGTEYGKTFIRKSNLVQHQKIH). C2H2-type zinc fingers lie at residues 298–320 (YECT…QKTH), 326–348 (YECN…QKVH), 354–376 (YECS…QRVH), 382–404 (FECS…QRVH), 410–432 (YKCS…LKIH), and 438–460 (YECT…QKIH). Lysine 466 carries the post-translational modification N6-acetyllysine. 2 consecutive C2H2-type zinc fingers follow at residues 483-505 (YTCS…QKIH) and 511-533 (YECT…EKIH). Lysine 539 bears the N6-acetyllysine mark. The C2H2-type 13; degenerate zinc finger occupies 556–578 (YVCSECGKAFLTQAHLDGHQKIQ). C2H2-type zinc fingers lie at residues 584–606 (YECN…QRIH), 612–634 (YKCS…QKVH), and 640–662 (YECS…QRVH). The C2H2-type 17; atypical zinc-finger motif lies at 668–690 (YECSNCGKFLRYRSTFIKHHKVC). The segment at 696 to 718 (HECSKCRELFRTKSSLIIHQQSH) adopts a C2H2-type 18 zinc-finger fold. The C2H2-type 19; degenerate zinc finger occupies 751-773 (YECGESSKVFKYNSSLIKHQIIH). Residues lysine 761 and lysine 768 each participate in a glycyl lysine isopeptide (Lys-Gly) (interchain with G-Cter in SUMO2) cross-link.

This sequence belongs to the krueppel C2H2-type zinc-finger protein family.

Its subcellular location is the nucleus. Functionally, may be involved in transcriptional regulation. This Homo sapiens (Human) protein is Zinc finger protein 749 (ZNF749).